A 155-amino-acid chain; its full sequence is MSRRGTAEEKTAKSDPIYRNRLVNMLVNRILKHGKKSLAYQIIYQAVKKMQQKTETNPLSVLRQAIRGVTPDIAVKARRVGGSTHQVPIEIGSTQGKALAIRWLLGASRKRPGRNMAFKLSSELVDAAKGSGDAIRKKEETHRMAEANRAFAHFR.

Belongs to the universal ribosomal protein uS7 family. As to quaternary structure, part of the 30S ribosomal subunit.

The protein resides in the plastid. It localises to the chloroplast. Functionally, one of the primary rRNA binding proteins, it binds directly to 16S rRNA where it nucleates assembly of the head domain of the 30S subunit. The protein is Small ribosomal subunit protein uS7c (rps7) of Allium textile (Textile onion).